A 261-amino-acid chain; its full sequence is Small ribosomal subunit protein uS3 (261 aa).

The region spanning 39–107 (VREYLKRKLA…PVHVSIEEIR (69 aa)) is the KH type-2 domain. The tract at residues 213 to 261 (QPVAEEPAADDRRPRRTPGRPDGDKPRTRTVKKVDGAADPAKRVRKAGA) is disordered. Residues 221–254 (ADDRRPRRTPGRPDGDKPRTRTVKKVDGAADPAK) show a composition bias toward basic and acidic residues.

This sequence belongs to the universal ribosomal protein uS3 family. As to quaternary structure, part of the 30S ribosomal subunit. Forms a tight complex with proteins S10 and S14.

Its function is as follows. Binds the lower part of the 30S subunit head. Binds mRNA in the 70S ribosome, positioning it for translation. The polypeptide is Small ribosomal subunit protein uS3 (Dechloromonas aromatica (strain RCB)).